A 634-amino-acid chain; its full sequence is Chaperone protein DnaK (634 aa).

At Thr199 the chain carries Phosphothreonine; by autocatalysis. The span at 601–618 (AAAGQAQAESGAGAQGNA) shows a compositional bias: low complexity. The segment at 601 to 634 (AAAGQAQAESGAGAQGNAKPDDVVDAEFEEVDKK) is disordered. The span at 623–634 (VVDAEFEEVDKK) shows a compositional bias: acidic residues.

Belongs to the heat shock protein 70 family.

Acts as a chaperone. The polypeptide is Chaperone protein DnaK (Acidithiobacillus ferrooxidans (strain ATCC 23270 / DSM 14882 / CIP 104768 / NCIMB 8455) (Ferrobacillus ferrooxidans (strain ATCC 23270))).